We begin with the raw amino-acid sequence, 61 residues long: Small ribosomal subunit protein uS14 (61 aa).

4 residues coordinate Zn(2+): Cys-24, Cys-27, Cys-40, and Cys-43.

The protein belongs to the universal ribosomal protein uS14 family. Zinc-binding uS14 subfamily. As to quaternary structure, part of the 30S ribosomal subunit. Contacts proteins S3 and S10. Requires Zn(2+) as cofactor.

Its function is as follows. Binds 16S rRNA, required for the assembly of 30S particles and may also be responsible for determining the conformation of the 16S rRNA at the A site. The sequence is that of Small ribosomal subunit protein uS14 from Heliobacterium modesticaldum (strain ATCC 51547 / Ice1).